Consider the following 197-residue polypeptide: Imidazoleglycerol-phosphate dehydratase (197 aa).

Belongs to the imidazoleglycerol-phosphate dehydratase family.

The protein localises to the cytoplasm. The catalysed reaction is D-erythro-1-(imidazol-4-yl)glycerol 3-phosphate = 3-(imidazol-4-yl)-2-oxopropyl phosphate + H2O. The protein operates within amino-acid biosynthesis; L-histidine biosynthesis; L-histidine from 5-phospho-alpha-D-ribose 1-diphosphate: step 6/9. This Rhodopseudomonas palustris (strain BisA53) protein is Imidazoleglycerol-phosphate dehydratase.